A 255-amino-acid polypeptide reads, in one-letter code: Capsid protein (255 aa).

The short motif at 1–25 (MVQKRKDLRRSDAGSAVRAKLHKAS) is the Bipartite nuclear localization signal element.

The protein belongs to the geminiviridae capsid protein family. As to quaternary structure, homomultimer. Interacts with the movement protein. Binds to single-stranded and double-stranded viral DNA.

It is found in the virion. It localises to the host nucleus. In terms of biological role, encapsidates the viral genome into characteristic twinned ('geminate') particles. Binds the genomic viral ssDNA and shuttles it into and out of the cell nucleus. Plays a role in protection of the genome from degradation, virus acquisition and transmission by insect vectors, infectivity, and systemic movement. The CP of monopartite geminiviruses is absolutely essential for virus movement. The protein is Capsid protein of Miscanthus streak virus (isolate 91) (MiSV).